The following is a 219-amino-acid chain: Cytidylate kinase (219 aa).

Gly10–Thr18 lines the ATP pocket.

This sequence belongs to the cytidylate kinase family. Type 1 subfamily.

The protein localises to the cytoplasm. It catalyses the reaction CMP + ATP = CDP + ADP. It carries out the reaction dCMP + ATP = dCDP + ADP. The protein is Cytidylate kinase of Staphylococcus aureus (strain JH9).